A 286-amino-acid chain; its full sequence is Protein NipSnap homolog 2 (286 aa).

The N-terminal 40 residues, 1–40 (MATRVLHSSCSGLYRAAGPARGKGHATAVIRSLSASHNRP), are a transit peptide targeting the mitochondrion.

Belongs to the NipSnap family.

It localises to the mitochondrion matrix. Its function is as follows. Protein involved in mitophagy. Accumulates on the mitochondria surface in response to mitochondrial depolarization and acts as a 'eat me' signal by recruiting proteins involved in selective autophagy. The chain is Protein NipSnap homolog 2 (nipsnap2) from Danio rerio (Zebrafish).